Here is a 385-residue protein sequence, read N- to C-terminus: Multidrug export protein AcrE (385 aa).

The N-terminal stretch at 1 to 23 (MTKHARFFLLPSFILISAALIAG) is a signal peptide. Residue Cys24 is the site of N-palmitoyl cysteine attachment. Cys24 carries S-diacylglycerol cysteine lipidation. Positions 366-385 (ARPGEQVKATTDTPADTASK) are disordered. Over residues 373-385 (KATTDTPADTASK) the composition is skewed to polar residues.

It belongs to the membrane fusion protein (MFP) (TC 8.A.1) family. In terms of assembly, part of the tripartite efflux system AcrEF-TolC, which is composed of an inner membrane transporter, AcrF, a periplasmic membrane fusion protein, AcrE, and an outer membrane component, TolC. The complex forms a large protein conduit and can translocate molecules across both the inner and outer membranes.

It localises to the cell inner membrane. Its function is as follows. Part of the tripartite efflux system AcrEF-TolC. Involved in the efflux of indole and organic solvents. This chain is Multidrug export protein AcrE (acrE), found in Escherichia coli (strain K12).